The following is a 37-amino-acid chain: Large ribosomal subunit protein bL36 (37 aa).

This sequence belongs to the bacterial ribosomal protein bL36 family.

The sequence is that of Large ribosomal subunit protein bL36 from Laribacter hongkongensis (strain HLHK9).